Consider the following 247-residue polypeptide: E3 ubiquitin-protein ligase RNF182 (247 aa).

The segment at 20-68 (CKICYNRYNLKQRKPKVLECCHRVCAKCLYKIIDFGDSPQGVIVCPFCR) adopts an RING-type zinc-finger fold. Helical transmembrane passes span 184–204 (VLVW…IYLL) and 211–231 (LGVV…VYGF).

In terms of assembly, interacts with ATP6V0C.

Its subcellular location is the membrane. The protein resides in the cytoplasm. It carries out the reaction S-ubiquitinyl-[E2 ubiquitin-conjugating enzyme]-L-cysteine + [acceptor protein]-L-lysine = [E2 ubiquitin-conjugating enzyme]-L-cysteine + N(6)-ubiquitinyl-[acceptor protein]-L-lysine.. Its pathway is protein modification; protein ubiquitination. E3 ubiquitin-protein ligase that mediates the ubiquitination of ATP6V0C and targets it to degradation via the ubiquitin-proteasome pathway. Also plays a role in the inhibition of TLR-triggered innate immune response by mediating 'Lys'-48-linked ubiquitination and subsequent degradation of NF-kappa-B component RELA. This is E3 ubiquitin-protein ligase RNF182 (Rnf182) from Rattus norvegicus (Rat).